Consider the following 316-residue polypeptide: MSEDLSKLHTSRMNKLQRKLRGEVGKAIGDYNMIEEGDRVMCCLSGGKDSYAMLDILLNLQQRAPIKFEIVAVNLDQKQPGFPEEVLPAYLDTLNVPYHIIEKDTYSVVREKIPEGQKTCSLCSRLRRGTLYGFAQKIGATKIALGHHRDDIIETLFLNMFFAGKQKAMPPKLLSDDGANMVIRPLAYSREKDIAEYAELKAFPIIPCNLCGSQENLKRAEVKDMLNLWDEHHPGRIESIFTAMQNTSPSQGVDREQFDFNSLQRDADAPLRGDVAESDLPAFDFVDVANNGHIDLDAAAKSRSENKIDIVSTYTP.

The short motif at 45 to 50 (SGGKDS) is the PP-loop motif element. [4Fe-4S] cluster-binding residues include Cys120, Cys123, and Cys211.

This sequence belongs to the TtcA family. As to quaternary structure, homodimer. The cofactor is Mg(2+). Requires [4Fe-4S] cluster as cofactor.

It localises to the cytoplasm. It carries out the reaction cytidine(32) in tRNA + S-sulfanyl-L-cysteinyl-[cysteine desulfurase] + AH2 + ATP = 2-thiocytidine(32) in tRNA + L-cysteinyl-[cysteine desulfurase] + A + AMP + diphosphate + H(+). The protein operates within tRNA modification. Its function is as follows. Catalyzes the ATP-dependent 2-thiolation of cytidine in position 32 of tRNA, to form 2-thiocytidine (s(2)C32). The sulfur atoms are provided by the cysteine/cysteine desulfurase (IscS) system. This Shewanella sediminis (strain HAW-EB3) protein is tRNA-cytidine(32) 2-sulfurtransferase.